The chain runs to 83 residues: Cytochrome b559 subunit alpha (83 aa).

A helical transmembrane segment spans residues 21 to 35; it reads VIHSITIPSLFIAGW. Histidine 23 is a heme binding site.

This sequence belongs to the PsbE/PsbF family. As to quaternary structure, heterodimer of an alpha subunit and a beta subunit. PSII is composed of 1 copy each of membrane proteins PsbA, PsbB, PsbC, PsbD, PsbE, PsbF, PsbH, PsbI, PsbJ, PsbK, PsbL, PsbM, PsbT, PsbX, PsbY, PsbZ, Psb30/Ycf12, at least 3 peripheral proteins of the oxygen-evolving complex and a large number of cofactors. It forms dimeric complexes. The cofactor is heme b.

The protein localises to the plastid. The protein resides in the chloroplast thylakoid membrane. In terms of biological role, this b-type cytochrome is tightly associated with the reaction center of photosystem II (PSII). PSII is a light-driven water:plastoquinone oxidoreductase that uses light energy to abstract electrons from H(2)O, generating O(2) and a proton gradient subsequently used for ATP formation. It consists of a core antenna complex that captures photons, and an electron transfer chain that converts photonic excitation into a charge separation. This is Cytochrome b559 subunit alpha from Agrostis stolonifera (Creeping bentgrass).